Here is a 540-residue protein sequence, read N- to C-terminus: Early growth response protein 1 (540 aa).

2 disordered regions span residues 1–105 and 162–240; these read MAAA…AESF and VSMT…PAYP. Positions 64–75 are enriched in gly residues; the sequence is SSGGGGGGGGGS. Residues 167–190 are compositionally biased toward low complexity; that stretch reads PPATSSSASSPAASSSASQSPPLS. The segment covering 192–201 has biased composition (polar residues); it reads AVQSNDSSPI. Residue Lys-304 forms a Glycyl lysine isopeptide (Lys-Gly) (interchain with G-Cter in SUMO2) linkage. The tract at residues 317-337 is disordered; that stretch reads PSRMRKYPNRPSKTPPHERPY. Residues 337-361 form a C2H2-type 1 zinc finger; sequence YACPVESCDRRFSRSDELTRHIRIH. A C2H2-type 2; degenerate zinc finger spans residues 366–388; it reads PQCRISMRNFSRSDHLTTHIRTH. The segment at 394–416 adopts a C2H2-type 3 zinc-finger fold; it reads FACDICGRKFARSDERKRHTKIH. Residues 407–482 are disordered; it reads DERKRHTKIH…SPGSSTYPSP (76 aa). The segment covering 411–421 has biased composition (basic residues); it reads RHTKIHLRQKD. Residues 427–482 show a composition bias toward low complexity; the sequence is SAASAATSSLPSYPSPVATSYPSPATTSYPSPATTSYPSPVPTSYSSPGSSTYPSP.

The protein belongs to the EGR C2H2-type zinc-finger protein family. Interacts with SNAI1 and SP1 upon 12-O-tetradecanoylphorbol-13-acetate (TPA) induction.

It is found in the nucleus. It localises to the cytoplasm. Its function is as follows. Transcriptional regulator. Recognizes and binds to the DNA sequence 5'-GCG(T/G)GGGCG-3'(EGR-site) in the promoter region of target genes. Binds double-stranded target DNA, irrespective of the cytosine methylation status. Regulates the transcription of numerous target genes, and thereby plays an important role in regulating the response to growth factors, DNA damage, and ischemia. Plays a role in the regulation of cell survival, proliferation and cell death. Activates expression of p53/TP53 and TGFB1, and thereby helps prevent tumor formation. Required for normal progress through mitosis and normal proliferation of hepatocytes after partial hepatectomy. Mediates responses to ischemia and hypoxia; regulates the expression of proteins such as IL1B and CXCL2 that are involved in inflammatory processes and development of tissue damage after ischemia. Regulates biosynthesis of luteinizing hormone (LHB) in the pituitary. Regulates the amplitude of the expression rhythms of clock genes: BMAL1, PER2 and NR1D1 in the liver via the activation of PER1 (clock repressor) transcription. Regulates the rhythmic expression of core-clock gene BMAL1 in the suprachiasmatic nucleus (SCN). The polypeptide is Early growth response protein 1 (EGR1) (Bos taurus (Bovine)).